The following is a 238-amino-acid chain: UDP-2,3-diacylglucosamine hydrolase (238 aa).

5 residues coordinate Mn(2+): D8, H10, D41, N78, and H113. Residue 78–79 participates in substrate binding; sequence NR. Residues D121, S159, N163, K166, and H194 each contribute to the substrate site. Mn(2+)-binding residues include H194 and H196.

The protein belongs to the LpxH family. The cofactor is Mn(2+).

Its subcellular location is the cell inner membrane. The enzyme catalyses UDP-2-N,3-O-bis[(3R)-3-hydroxytetradecanoyl]-alpha-D-glucosamine + H2O = 2-N,3-O-bis[(3R)-3-hydroxytetradecanoyl]-alpha-D-glucosaminyl 1-phosphate + UMP + 2 H(+). Its pathway is glycolipid biosynthesis; lipid IV(A) biosynthesis; lipid IV(A) from (3R)-3-hydroxytetradecanoyl-[acyl-carrier-protein] and UDP-N-acetyl-alpha-D-glucosamine: step 4/6. Hydrolyzes the pyrophosphate bond of UDP-2,3-diacylglucosamine to yield 2,3-diacylglucosamine 1-phosphate (lipid X) and UMP by catalyzing the attack of water at the alpha-P atom. Involved in the biosynthesis of lipid A, a phosphorylated glycolipid that anchors the lipopolysaccharide to the outer membrane of the cell. This chain is UDP-2,3-diacylglucosamine hydrolase, found in Shewanella halifaxensis (strain HAW-EB4).